The sequence spans 192 residues: Leucine-rich repeat-containing protein 51 (192 aa).

3 LRR repeats span residues 49–71 (SLTQ…NQVV), 80–101 (NLAW…LTTF), and 103–124 (NLSV…NKLA). One can recognise an LRRCT domain in the interval 137 to 175 (NPIEEEKGYRQYVLCNLPRITTFDFSGVTKADRSTAEVW).

The protein localises to the cytoplasm. The sequence is that of Leucine-rich repeat-containing protein 51 from Rattus norvegicus (Rat).